The sequence spans 331 residues: XylDLEGF operon transcriptional activator 1 (331 aa).

Positions E214–R315 constitute an HTH araC/xylS-type domain. 2 consecutive DNA-binding regions (H-T-H motif) follow at residues E231–A252 and V282–F305.

Its subcellular location is the cytoplasm. Its function is as follows. Regulatory protein of the TOL plasmid xyl operons. XylS activates the xylXYZLTEGFJQKIH operon required for the degradation of toluene, m-xylene and p-xylene. This Pseudomonas putida (Arthrobacter siderocapsulatus) protein is XylDLEGF operon transcriptional activator 1 (xylS1).